A 97-amino-acid chain; its full sequence is uncharacterized protein (97 aa).

In terms of biological role, may have a regulatory function. This is an uncharacterized protein from Synechocystis sp. (strain ATCC 27184 / PCC 6803 / Kazusa).